We begin with the raw amino-acid sequence, 283 residues long: Pantothenate synthetase (283 aa).

An ATP-binding site is contributed by 30 to 37 (MGALHEGH). His-37 (proton donor) is an active-site residue. Residue Gln-61 participates in (R)-pantoate binding. Residue Gln-61 coordinates beta-alanine. 149-152 (GEKD) serves as a coordination point for ATP. Residue Gln-155 coordinates (R)-pantoate. ATP is bound by residues Leu-178 and 186-189 (RSSR).

The protein belongs to the pantothenate synthetase family. In terms of assembly, homodimer.

The protein localises to the cytoplasm. It carries out the reaction (R)-pantoate + beta-alanine + ATP = (R)-pantothenate + AMP + diphosphate + H(+). The protein operates within cofactor biosynthesis; (R)-pantothenate biosynthesis; (R)-pantothenate from (R)-pantoate and beta-alanine: step 1/1. In terms of biological role, catalyzes the condensation of pantoate with beta-alanine in an ATP-dependent reaction via a pantoyl-adenylate intermediate. The chain is Pantothenate synthetase from Christiangramia forsetii (strain DSM 17595 / CGMCC 1.15422 / KT0803) (Gramella forsetii).